A 427-amino-acid chain; its full sequence is Protein TolB homolog (427 aa).

An N-terminal signal peptide occupies residues 1–20 (MLRRIFVSTFLVFGIVSLYA).

Belongs to the TolB family.

The protein localises to the periplasm. The polypeptide is Protein TolB homolog (Chlamydia caviae (strain ATCC VR-813 / DSM 19441 / 03DC25 / GPIC) (Chlamydophila caviae)).